The following is a 1868-amino-acid chain: Dedicator of cytokinesis protein 5 (1868 aa).

One can recognise an SH3 domain in the interval 8-69; sequence KRQKYGVAIY…PETYIHLKEA (62 aa). The residue at position 365 (S365) is a Phosphoserine. Residues 443–627 enclose the C2 DOCK-type domain; that stretch reads RNDIYVTLIH…DSFQIATLIC (185 aa). K818 carries the N6-acetyllysine modification. Positions 1231–1642 constitute a DOCKER domain; sequence YKDKKREDIY…VEKLYGVITL (412 aa). Low complexity predominate over residues 1681–1692; that stretch reads STSSNSSDNASS. Disordered regions lie at residues 1681–1730 and 1742–1868; these read STSS…RISK and QVIA…PGSQ. The segment covering 1704–1728 has biased composition (basic and acidic residues); the sequence is LFERRASSGARVEDLPPKEDSENRI. S1755, S1765, S1771, S1784, and S1788 each carry phosphoserine. Phosphothreonine is present on T1793. Positions 1796 to 1810 are enriched in polar residues; the sequence is ATRTLSSPSLQTDGL. Phosphoserine occurs at positions 1832 and 1867.

It belongs to the DOCK family. In terms of assembly, interacts with CRK and CRKL. Interacts (via N-terminus) with tensin TNS3 (via N-terminus); the interaction increases DOCK5 guanine nucleotide exchange activity towards Rac. Interacts with ELMO1. As to expression, highly expressed in lens, where it predominantly localizes to anterior epithelial cells, and is weakly expressed in lens fiber (at protein level). Expressed in brain, eye, lung, spleen and kidney, but not in thymus or peripheral blood leukocytes.

The protein localises to the cytoplasm. The protein resides in the cell membrane. It is found in the cell projection. It localises to the podosome. Guanine nucleotide exchange factor (GEF) for Rho and Rac. GEF proteins activate small GTPases by exchanging bound GDP for free GTP. Along with DOCK1, mediates CRK/CRKL regulation of epithelial and endothelial cell spreading and migration on type IV collagen. In Mus musculus (Mouse), this protein is Dedicator of cytokinesis protein 5.